The chain runs to 508 residues: UBX domain-containing protein 4 (508 aa).

Residues 1-200 are interaction with UBQLN1; the sequence is MLWFQGAIPA…PAEDLNIRVE (200 aa). Residues 1-413 are Cytoplasmic-facing; sequence MLWFQGAIPA…VHSSSGDIWT (413 aa). 2 stretches are compositionally biased toward polar residues: residues 117 to 151 and 160 to 187; these read SETS…QSRN and TSDT…SGCS. The segment at 117-196 is disordered; the sequence is SETSVANGSQ…SDQRPAEDLN (80 aa). Positions 315–393 constitute a UBX domain; that stretch reads ERSTVARIQF…ELAPSASVVL (79 aa). An intramembrane segment occupies 414–434; that stretch reads LLGTVLYPFLAIWRLISNFLF. Topologically, residues 435–508 are cytoplasmic; sequence SNPPPTQTSV…TWNGNSTQQM (74 aa). Positions 440 to 508 are disordered; that stretch reads TQTSVRVTSS…TWNGNSTQQM (69 aa). Positions 441–458 are enriched in polar residues; that stretch reads QTSVRVTSSEPPNPASSS. Positions 459–491 are enriched in basic and acidic residues; sequence KSEKREPVRKRVLEKRGDDFKKEGKIYRLRTQD. Residue Thr-489 is modified to Phosphothreonine. Residues 498-508 show a composition bias toward polar residues; sequence NTWNGNSTQQM.

Directly interacts with VCP. Interacts with UBQLN1. Forms a complex with VCP and UBQLN1. As to expression, expressed in many tissues, including heart, brain, placenta, lung, liver, skeletal muscle, kidney and pancreas. Accumulates in Alzheimer disease-afflicted brains (at protein level).

The protein localises to the endoplasmic reticulum membrane. Its subcellular location is the nucleus envelope. In terms of biological role, involved in endoplasmic reticulum-associated protein degradation (ERAD). Acts as a platform to recruit both UBQLN1 and VCP to the ER during ERAD. The chain is UBX domain-containing protein 4 (UBXN4) from Homo sapiens (Human).